The chain runs to 392 residues: ATP phosphoribosyltransferase regulatory subunit (392 aa).

This sequence belongs to the class-II aminoacyl-tRNA synthetase family. HisZ subfamily. As to quaternary structure, heteromultimer composed of HisG and HisZ subunits.

It is found in the cytoplasm. Its pathway is amino-acid biosynthesis; L-histidine biosynthesis; L-histidine from 5-phospho-alpha-D-ribose 1-diphosphate: step 1/9. Its function is as follows. Required for the first step of histidine biosynthesis. May allow the feedback regulation of ATP phosphoribosyltransferase activity by histidine. This Prochlorococcus marinus (strain MIT 9211) protein is ATP phosphoribosyltransferase regulatory subunit.